Here is a 315-residue protein sequence, read N- to C-terminus: Gamma-hemolysin component C (315 aa).

The N-terminal stretch at 1-29 (MLKNKILATTLSVSLLAPLANPLLENAKA) is a signal peptide.

Belongs to the aerolysin family. Toxicity requires sequential binding and synergistic association of a class S and a class F component which form heterooligomeric complexes. HlgC (class S) associates with HlgB (class F) thus forming an CB toxin.

In terms of biological role, toxin that seems to act by forming pores in the membrane of the cell. Has a hemolytic and a leucotoxic activity. This chain is Gamma-hemolysin component C (hlgC), found in Staphylococcus aureus (strain MRSA252).